Reading from the N-terminus, the 116-residue chain is NADH dehydrogenase [ubiquinone] 1 alpha subcomplex subunit 5 (116 aa).

Position 2 is an N-acetylalanine (alanine 2). N6-acetyllysine occurs at positions 30, 46, and 60. The residue at position 89 (serine 89) is a Phosphoserine. Position 98 is an N6-acetyllysine; alternate (lysine 98). Lysine 98 is modified (N6-succinyllysine; alternate).

The protein belongs to the complex I NDUFA5 subunit family. Complex I is composed of 45 different subunits.

It localises to the mitochondrion inner membrane. Accessory subunit of the mitochondrial membrane respiratory chain NADH dehydrogenase (Complex I), that is believed not to be involved in catalysis. Complex I functions in the transfer of electrons from NADH to the respiratory chain. The immediate electron acceptor for the enzyme is believed to be ubiquinone. The sequence is that of NADH dehydrogenase [ubiquinone] 1 alpha subcomplex subunit 5 (NDUFA5) from Macaca fascicularis (Crab-eating macaque).